Here is a 235-residue protein sequence, read N- to C-terminus: 2-C-methyl-D-erythritol 4-phosphate cytidylyltransferase (235 aa).

Belongs to the IspD/TarI cytidylyltransferase family. IspD subfamily.

The catalysed reaction is 2-C-methyl-D-erythritol 4-phosphate + CTP + H(+) = 4-CDP-2-C-methyl-D-erythritol + diphosphate. It functions in the pathway isoprenoid biosynthesis; isopentenyl diphosphate biosynthesis via DXP pathway; isopentenyl diphosphate from 1-deoxy-D-xylulose 5-phosphate: step 2/6. In terms of biological role, catalyzes the formation of 4-diphosphocytidyl-2-C-methyl-D-erythritol from CTP and 2-C-methyl-D-erythritol 4-phosphate (MEP). In Pseudomonas fluorescens (strain Pf0-1), this protein is 2-C-methyl-D-erythritol 4-phosphate cytidylyltransferase.